We begin with the raw amino-acid sequence, 754 residues long: Fibronectin type III domain-containing protein 1 (754 aa).

Residues 1-19 (MKSWISISFLCMLFPLSNG) form the signal peptide. 3 disordered regions span residues 40–61 (SLQG…SQGG), 85–106 (AQIS…TQFS), and 130–163 (AQHS…AQSG). A compositionally biased stretch (low complexity) spans 130–161 (AQHSQAGAQGSQFPQSAAHTAQHHQGTAQPAQ). Fibronectin type-III domains are found at residues 250-355 (PPQS…TPDL), 359-449 (APLN…TDKF), 453-545 (APRN…TKMD), 549-642 (EPMS…LPKP), and 645-742 (LVPN…SFPG). The interval 731-754 (SNLSSQQFSFPGQQVGQQQSNPWI) is disordered.

Prismatic layer of shell (at protein level). Expressed primarily in the mantle with highest level in the outer epithelium of the mantle edge and lower level in the mantle pallium.

It is found in the secreted. The chain is Fibronectin type III domain-containing protein 1 from Margaritifera margaritifera (Freshwater pearl mussel).